The chain runs to 331 residues: tRNA-dihydrouridine(20/20a) synthase (331 aa).

Residues 18–20 and glutamine 70 contribute to the FMN site; that span reads PML. Catalysis depends on cysteine 100, which acts as the Proton donor. FMN contacts are provided by residues lysine 139, histidine 172, 212 to 214, and 234 to 235; these read NGG and GR.

It belongs to the Dus family. DusA subfamily. Requires FMN as cofactor.

It carries out the reaction 5,6-dihydrouridine(20) in tRNA + NADP(+) = uridine(20) in tRNA + NADPH + H(+). The enzyme catalyses 5,6-dihydrouridine(20) in tRNA + NAD(+) = uridine(20) in tRNA + NADH + H(+). It catalyses the reaction 5,6-dihydrouridine(20a) in tRNA + NADP(+) = uridine(20a) in tRNA + NADPH + H(+). The catalysed reaction is 5,6-dihydrouridine(20a) in tRNA + NAD(+) = uridine(20a) in tRNA + NADH + H(+). In terms of biological role, catalyzes the synthesis of 5,6-dihydrouridine (D), a modified base found in the D-loop of most tRNAs, via the reduction of the C5-C6 double bond in target uridines. Specifically modifies U20 and U20a in tRNAs. In Escherichia coli O6:H1 (strain CFT073 / ATCC 700928 / UPEC), this protein is tRNA-dihydrouridine(20/20a) synthase.